Consider the following 248-residue polypeptide: 2,3-bisphosphoglycerate-dependent phosphoglycerate mutase (248 aa).

Residues 8–15 (RHGESEWN), 21–22 (TG), Arg60, 87–90 (ERHY), Lys98, 114–115 (RR), and 183–184 (GN) contribute to the substrate site. The active-site Tele-phosphohistidine intermediate is the His9. Glu87 serves as the catalytic Proton donor/acceptor.

Belongs to the phosphoglycerate mutase family. BPG-dependent PGAM subfamily.

It carries out the reaction (2R)-2-phosphoglycerate = (2R)-3-phosphoglycerate. It participates in carbohydrate degradation; glycolysis; pyruvate from D-glyceraldehyde 3-phosphate: step 3/5. Its function is as follows. Catalyzes the interconversion of 2-phosphoglycerate and 3-phosphoglycerate. This is 2,3-bisphosphoglycerate-dependent phosphoglycerate mutase from Coprothermobacter proteolyticus (strain ATCC 35245 / DSM 5265 / OCM 4 / BT).